A 206-amino-acid chain; its full sequence is MAITAQMVKALREKTGVGMMDCKKALAECDGNEENAIKYLREKGLAKAAKKAGRATSEGLVGTYTHSNGKLVAMVELKCETDFVAKAEQFIQLSKDLAMQVAATSPVCVKPEDLPQEMLEKEKEIYKQQAIAEGKPENIAEKIVEGRVNKYYKEVCLLEQPFIKDDKKTIKDLLNDTIAVLGENMQIGRFARINLAEAVAEESEAE.

Residues 81 to 84 are involved in Mg(2+) ion dislocation from EF-Tu; sequence TDFV.

This sequence belongs to the EF-Ts family.

The protein localises to the cytoplasm. Associates with the EF-Tu.GDP complex and induces the exchange of GDP to GTP. It remains bound to the aminoacyl-tRNA.EF-Tu.GTP complex up to the GTP hydrolysis stage on the ribosome. This Maridesulfovibrio salexigens (strain ATCC 14822 / DSM 2638 / NCIMB 8403 / VKM B-1763) (Desulfovibrio salexigens) protein is Elongation factor Ts.